The chain runs to 352 residues: Protein RecA (352 aa).

67-74 lines the ATP pocket; the sequence is GPESSGKT. A disordered region spans residues 333 to 352; that stretch reads DSTPDFAVDGNDAEETEQDF. Residues 343–352 show a composition bias toward acidic residues; it reads NDAEETEQDF.

Belongs to the RecA family.

It is found in the cytoplasm. In terms of biological role, can catalyze the hydrolysis of ATP in the presence of single-stranded DNA, the ATP-dependent uptake of single-stranded DNA by duplex DNA, and the ATP-dependent hybridization of homologous single-stranded DNAs. It interacts with LexA causing its activation and leading to its autocatalytic cleavage. The chain is Protein RecA from Klebsiella pneumoniae (strain 342).